We begin with the raw amino-acid sequence, 151 residues long: Ribosome maturation factor RimP (151 aa).

It belongs to the RimP family.

It is found in the cytoplasm. In terms of biological role, required for maturation of 30S ribosomal subunits. This is Ribosome maturation factor RimP from Caldicellulosiruptor saccharolyticus (strain ATCC 43494 / DSM 8903 / Tp8T 6331).